Here is a 342-residue protein sequence, read N- to C-terminus: DNA primase small subunit PriS (342 aa).

Active-site residues include Asp-97, Asp-99, and Asp-276.

The protein belongs to the eukaryotic-type primase small subunit family. Heterodimer of a small subunit (PriS) and a large subunit (PriL). Mg(2+) is required as a cofactor. The cofactor is Mn(2+).

In terms of biological role, catalytic subunit of DNA primase, an RNA polymerase that catalyzes the synthesis of short RNA molecules used as primers for DNA polymerase during DNA replication. The small subunit contains the primase catalytic core and has DNA synthesis activity on its own. Binding to the large subunit stabilizes and modulates the activity, increasing the rate of DNA synthesis while decreasing the length of the DNA fragments, and conferring RNA synthesis capability. The DNA polymerase activity may enable DNA primase to also catalyze primer extension after primer synthesis. May also play a role in DNA repair. The protein is DNA primase small subunit PriS of Thermococcus sibiricus (strain DSM 12597 / MM 739).